The primary structure comprises 392 residues: Formate-dependent phosphoribosylglycinamide formyltransferase (392 aa).

Residues 22–23 and E82 each bind N(1)-(5-phospho-beta-D-ribosyl)glycinamide; that span reads EL. ATP-binding positions include R114, K155, 160–165, 195–198, and E203; these read SSGKGQ and EGEV. One can recognise an ATP-grasp domain in the interval 119–308; sequence RLAAETLALP…EFALHVRAFL (190 aa). Mg(2+)-binding residues include E267 and E279. Residues D286, K355, and 362-363 each bind N(1)-(5-phospho-beta-D-ribosyl)glycinamide; that span reads RR.

It belongs to the PurK/PurT family. In terms of assembly, homodimer.

It carries out the reaction N(1)-(5-phospho-beta-D-ribosyl)glycinamide + formate + ATP = N(2)-formyl-N(1)-(5-phospho-beta-D-ribosyl)glycinamide + ADP + phosphate + H(+). The protein operates within purine metabolism; IMP biosynthesis via de novo pathway; N(2)-formyl-N(1)-(5-phospho-D-ribosyl)glycinamide from N(1)-(5-phospho-D-ribosyl)glycinamide (formate route): step 1/1. Functionally, involved in the de novo purine biosynthesis. Catalyzes the transfer of formate to 5-phospho-ribosyl-glycinamide (GAR), producing 5-phospho-ribosyl-N-formylglycinamide (FGAR). Formate is provided by PurU via hydrolysis of 10-formyl-tetrahydrofolate. The polypeptide is Formate-dependent phosphoribosylglycinamide formyltransferase (Edwardsiella ictaluri (strain 93-146)).